A 704-amino-acid polypeptide reads, in one-letter code: uncharacterized protein (704 aa).

This is an uncharacterized protein from Rickettsia conorii (strain ATCC VR-613 / Malish 7).